The following is a 60-amino-acid chain: MAVQQNKKSPSKRGMHRSHDFLVNPSTAIEPTTGETHLRHHISPNGFYRGRKVLKTKADE.

The segment at 1-60 is disordered; sequence MAVQQNKKSPSKRGMHRSHDFLVNPSTAIEPTTGETHLRHHISPNGFYRGRKVLKTKADE. Residues 24–35 are compositionally biased toward polar residues; that stretch reads NPSTAIEPTTGE. Basic residues predominate over residues 49 to 60; sequence RGRKVLKTKADE.

Belongs to the bacterial ribosomal protein bL32 family.

This Bordetella petrii (strain ATCC BAA-461 / DSM 12804 / CCUG 43448) protein is Large ribosomal subunit protein bL32.